A 1604-amino-acid polypeptide reads, in one-letter code: Putative surface cell antigen sca2 (1604 aa).

The first 33 residues, 1–33 (MSLQNSHSKKYVLTFFMSTCLLTSSFLSTSARA), serve as a signal peptide directing secretion. 3 disordered regions span residues 324–354 (TTKPFTKHSRTTTNTAGISSGVPFDTGRTKP), 554–603 (NVNN…SNPN), and 1183–1240 (QQEN…KSLL). Low complexity predominate over residues 554 to 564 (NVNNNSNKGQN). Positions 568 to 587 (ILPPTPPLNGSMPPSPPPPL) are enriched in pro residues. Composition is skewed to basic and acidic residues over residues 1193-1213 (SSTKDDPQPEDSNKKSEKSDS) and 1227-1240 (SKNDKSSDDKKSLL). Residues 1325–1604 (EASINRGVWI…QGLIKLKVNL (280 aa)) form the Autotransporter domain.

The protein localises to the cell outer membrane. The sequence is that of Putative surface cell antigen sca2 (sca2) from Rickettsia felis (strain ATCC VR-1525 / URRWXCal2) (Rickettsia azadi).